The following is a 402-amino-acid chain: Endoglucanase 1 (402 aa).

Glutamine 1 is subject to Pyrrolidone carboxylic acid. 3 disulfides stabilise this stretch: cysteine 18–cysteine 24, cysteine 51–cysteine 73, and cysteine 63–cysteine 69. N-linked (GlcNAc...) asparagine glycosylation is present at asparagine 89. Cystine bridges form between cysteine 140–cysteine 365, cysteine 172–cysteine 195, cysteine 176–cysteine 194, cysteine 215–cysteine 234, cysteine 223–cysteine 228, and cysteine 239–cysteine 315. Glutamate 197 serves as the catalytic Nucleophile. The active-site Proton donor is the glutamate 202. An N-linked (GlcNAc...) asparagine glycan is attached at asparagine 247.

This sequence belongs to the glycosyl hydrolase 7 (cellulase C) family. In terms of assembly, monomer.

It is found in the secreted. It catalyses the reaction Endohydrolysis of (1-&gt;4)-beta-D-glucosidic linkages in cellulose, lichenin and cereal beta-D-glucans.. The biological conversion of cellulose to glucose generally requires three types of hydrolytic enzymes: (1) Endoglucanases which cut internal beta-1,4-glucosidic bonds; (2) Exocellobiohydrolases that cut the disaccharide cellobiose from the non-reducing end of the cellulose polymer chain; (3) Beta-1,4-glucosidases which hydrolyze the cellobiose and other short cello-oligosaccharides to glucose. This is Endoglucanase 1 (CEL7B) from Humicola insolens (Soft-rot fungus).